Consider the following 359-residue polypeptide: MMP endo-(1,4)-3-O-methyl-alpha-D-mannosidase (359 aa).

In terms of assembly, monomer in solution.

It catalyses the reaction Endohydrolysis of 3-O-methyl-alpha-D-mannosyl-(1-&gt;4)-3-O-methyl-D-mannose linkages within (1,4)-3-O-methyl-alpha-D-mannnan substrates.. In terms of biological role, hydrolase involved in the biosynthesis of 3-O-methylmannose polysaccharides (MMP), which are intracellular polymethylated polysaccharides implicated in the modulation of fatty acid metabolism in non-tuberculous mycobacteria. Highly specific hydrolase that catalyzes the internal cleavage of MMP. Is able to hydrolyze purified MMP into distinct lower order oligomannosides but does not cleave acylated or deacylated forms of 6-O-methylglucose lipopolysaccharide (MGLP), beta-mannans, synthetic 4alpha-oligomannosides or its own reaction products. Products were identified as four distinct oligomannosides differing in the number of mannose units (4 to 8) and methylation pattern (free or methylated C1-OH). Might serve as a recycling enzyme that hydrolyzes mature MMP into defined-size smaller oligomannosides that are, in turn, substrates for ManT and MeT1 activities for further processing into new daughter MMP chains. The polypeptide is MMP endo-(1,4)-3-O-methyl-alpha-D-mannosidase (Mycolicibacterium hassiacum (strain DSM 44199 / CIP 105218 / JCM 12690 / 3849) (Mycobacterium hassiacum)).